A 408-amino-acid polypeptide reads, in one-letter code: tRNA pseudouridine synthase D (408 aa).

Asp82 functions as the Nucleophile in the catalytic mechanism. A TRUD domain is found at 157 to 367 (GVPNRFGEQR…MEGERRPLRV (211 aa)).

The protein belongs to the pseudouridine synthase TruD family.

It carries out the reaction uridine(13) in tRNA = pseudouridine(13) in tRNA. Responsible for synthesis of pseudouridine from uracil-13 in transfer RNAs. The chain is tRNA pseudouridine synthase D from Geobacter sulfurreducens (strain ATCC 51573 / DSM 12127 / PCA).